A 554-amino-acid chain; its full sequence is CTP synthase (554 aa).

Positions 1–270 (MTKFVFVTGG…DRIICEELRI (270 aa)) are amidoligase domain. CTP is bound at residue S13. S13 serves as a coordination point for UTP. ATP is bound by residues 14-19 (SLGKGI) and D71. Mg(2+) contacts are provided by D71 and E144. Residues 151–153 (DIE), 191–196 (KTKPTQ), and K227 each bind CTP. UTP contacts are provided by residues 191-196 (KTKPTQ) and K227. Residues 295-547 (TIGMVGKYVD…VEAALAHRQR (253 aa)) enclose the Glutamine amidotransferase type-1 domain. G356 serves as a coordination point for L-glutamine. The active-site Nucleophile; for glutamine hydrolysis is the C383. Residues 384-387 (LGMQ), E407, and R473 contribute to the L-glutamine site. Catalysis depends on residues H520 and E522.

The protein belongs to the CTP synthase family. In terms of assembly, homotetramer.

The catalysed reaction is UTP + L-glutamine + ATP + H2O = CTP + L-glutamate + ADP + phosphate + 2 H(+). The enzyme catalyses L-glutamine + H2O = L-glutamate + NH4(+). It catalyses the reaction UTP + NH4(+) + ATP = CTP + ADP + phosphate + 2 H(+). It functions in the pathway pyrimidine metabolism; CTP biosynthesis via de novo pathway; CTP from UDP: step 2/2. With respect to regulation, allosterically activated by GTP, when glutamine is the substrate; GTP has no effect on the reaction when ammonia is the substrate. The allosteric effector GTP functions by stabilizing the protein conformation that binds the tetrahedral intermediate(s) formed during glutamine hydrolysis. Inhibited by the product CTP, via allosteric rather than competitive inhibition. Catalyzes the ATP-dependent amination of UTP to CTP with either L-glutamine or ammonia as the source of nitrogen. Regulates intracellular CTP levels through interactions with the four ribonucleotide triphosphates. The polypeptide is CTP synthase (Ralstonia nicotianae (strain ATCC BAA-1114 / GMI1000) (Ralstonia solanacearum)).